Here is a 504-residue protein sequence, read N- to C-terminus: Deoxyguanosinetriphosphate triphosphohydrolase (504 aa).

Residues 66–273 (RLTHSLEVQQ…MEAADDISYC (208 aa)) enclose the HD domain.

This sequence belongs to the dGTPase family. Type 1 subfamily. In terms of assembly, homotetramer. It depends on Mg(2+) as a cofactor.

It catalyses the reaction dGTP + H2O = 2'-deoxyguanosine + triphosphate + H(+). Its function is as follows. dGTPase preferentially hydrolyzes dGTP over the other canonical NTPs. The protein is Deoxyguanosinetriphosphate triphosphohydrolase of Cronobacter sakazakii (strain ATCC BAA-894) (Enterobacter sakazakii).